The sequence spans 519 residues: Circadian clock oscillator protein KaiC (519 aa).

The 247-residue stretch at 1–247 (MTSAEMTSPN…TITDHGINIF (247 aa)) folds into the KaiC 1 domain. ATP contacts are provided by glycine 49, threonine 50, glycine 51, lysine 52, threonine 53, and leucine 54. Threonine 53 contributes to the Mg(2+) binding site. The active-site Proton acceptor in CI (KaiC 1) is the glutamate 77. ATP is bound at residue serine 89. The B-loop, required to bind KaiB and SasA stretch occupies residues 115 to 122 (QEVVGGFD). Residues lysine 224, leucine 225, arginine 226, threonine 228, histidine 230, threonine 240, and aspartate 241 each coordinate ATP. A linker region spans residues 248-260 (PLGAMRLTQRSSN). The KaiC 2 domain maps to 261–519 (VRVSSGVVRL…RGVQEKGPES (259 aa)). Residues threonine 290, glycine 291, threonine 292, glycine 293, lysine 294, threonine 295, and leucine 296 each coordinate ATP. Residue threonine 295 coordinates Mg(2+). Glutamate 318 is a Mg(2+) binding site. Glutamate 318 functions as the Proton acceptor in CII (KaiC 2) in the catalytic mechanism. Tryptophan 331 serves as a coordination point for ATP. Serine 431 carries the post-translational modification Phosphoserine; by autocatalysis. A Phosphothreonine; by autocatalysis modification is found at threonine 432. ATP contacts are provided by arginine 451, lysine 457, methionine 458, arginine 459, serine 461, histidine 463, and lysine 465. The interval 488 to 497 (RIISGSPTRI) is A-loop, interacts with KaiA.

This sequence belongs to the KaiC family. Homohexamer resembling 2 stacked donuts with a central pore nearly blocked on one side; hexamerization is dependent on ATP-binding. Binds 12 ATP; 6 between each subunit in both layers. KaiB only binds to phospho-Ser-431 KaiC (not doubly phosphorylated KaiC). Complex formation between KaiB and KaiC is regulated by the phosphorylation state of KaiC and by an ATP hydrolysis-driven conformation change in the CI ring of KaiC; complex formation is slow. Slow complex formation is crucial for the timing of the circadian period. KaiB switches to a thioredoxin-like form called KaiB(fs) when bound to KaiC. The KaiABC complex composition changes during the circadian cycle to control KaiC phosphorylation. Complexes KaiC(6), KaiA(2-4):KaiC(6), KaiB(6):KaiC(6) and KaiC(6):KaiB(6):KaiA(12) are among the most important forms, many form cooperatively. Interacts directly with KaiB and SasA. The CI domain binds to KaiB and SasA; as they have a similar fold they compete for the same site on CI. CikA interacts with this protein in the clock complex. Binds to the C-terminus of KaiA via a coiled-coil structure. Forms KaiC(6):KaiB(1) and KaiC(6):KaiB(6) complexes. It depends on Mg(2+) as a cofactor. Post-translationally, has a 4 step phosphorylation cycle; the autokinase acts first on Thr-432, then Ser-431. When Ser-431 is modified KaiC switches to an autophosphatase mode, acting first on phospho-Thr-432 then phospho-Ser-431. Phosphorylated and dephosphorylated on serine/threonine residues by autocatalysis. Unphosphorylated, mono- and di-phosphorylated forms exist. The phosphorylated form correlates with clock speed. The presence of KaiA increases phosphorylation and stabilizes these forms. In terms of processing, phosphorylated on serine and threonine residues by autocatalysis. Has a 4 step phosphorylation cycle; the autokinase acts first on Thr-432, then Ser-431. When Ser-431 is modified KaiC switches to an autophosphatase mode, acting first on phospho-Thr-432 then phospho-Ser-431.

The catalysed reaction is L-seryl-[protein] + ATP = O-phospho-L-seryl-[protein] + ADP + H(+). It carries out the reaction L-threonyl-[protein] + ATP = O-phospho-L-threonyl-[protein] + ADP + H(+). It catalyses the reaction ATP + H2O = ADP + phosphate + H(+). With respect to regulation, interaction with KaiA stimulates autophosphorylation, KaiC interaction with KaiB sequesters KaiA, preventing it stimulating the KaiC kinase, leading to autodephosphorylation. A KaiA dimer is sufficient to enhance KaiC phosphorylation. Interaction of KaiA with the A-loop stimulates autokinase activity. The KaiABC oscillator complex constitutes the main circadian regulator in cyanobacteria. Complex composition changes during the circadian cycle to control KaiC phosphorylation; KaiA stimulates KaiC autophosphorylation, while KaiB sequesters KaiA, leading to KaiC autodephosphorylation. The Kai complex controls chromosome condensation, leading to a transcription accessible chromosome during the first half of the circadian cycle and a compact, less transcription-accessible chromosome during the latter half. Clock output pathways impact the RpaA transcriptional regulator. Circadian oscillations can be generated in vitro by incubating KaiA, KaiB and KaiC with 1 mM ATP. The cycle is self-sustainable for at least 3 cycles and resistant to temperature changes. Mutations in KaiC alone prolong or reduce the circadian rhythm. A very robust clock is reconstituted with KaiA, KaiB, KaiC, SasA, CikA and RpaA; output is measured by transcription from an appropriate reporter. Functionally, the level of KaiC phosphorylation and KaiC ATPase activity represent the key features of the biochemical oscillator. KaiA homodimer binding to the KaiC CII domain stimulates KaiC's ATPase activity and forms KaiA(2-4):KaiC(6) complexes, which stimulate KaiC autophosphorylation first on Thr-432 then Ser-431. Phospho-Ser-431-KaiC accumulation triggers binding of KaiB to CI to form the KaiB(6):KaiC(6) complex, leading to changes in the output regulators CikA and SasA. KaiB(6):KaiC(6) formation exposes a site for KaiA binding that sequesters KaiA from the CII domain, making the KaiC(6):KaiB(6):KaiA(12) complex that results in KaiC autodephosphorylation. Complete dephosphorylation of KaiC leads to dissociation of KaiA(2):KaiB(1), completing 1 cycle of the Kai oscillator. In terms of biological role, has a weak, temperature-independent ATPase activity (about 15 molecules of ATP per day); the addition of KaiA and KaiB increases activity slightly and makes the activity oscillate with a circadian period in vitro for over 60 hours. ATPase activity defines the circadian period. The phosphorylation state of KaiC modulates its ATPase activity and effects KaiB binding. Its function is as follows. There are several clock output pathways; SasA/RpaA, CikA/RpaA and LabA. KaiC enhances the autophosphorylation activity of SasA, which then transfers its phosphate group to RpaA to activate it. Phosphotransfer is maximal when KaiC phosphorylation is active during the circadian cycle. KaiB and KaiC together enhance the phosphatase activity of CikA on phospho-RpaA. KaiC is important for metabolic partitioning during the dark to light shift, modulating the balance between the Calvin cycle and oxidative pentose phosphate pathway under natural growth conditions. This chain is Circadian clock oscillator protein KaiC, found in Synechococcus elongatus (strain ATCC 33912 / PCC 7942 / FACHB-805) (Anacystis nidulans R2).